Reading from the N-terminus, the 686-residue chain is XK-related protein 5 (686 aa).

The next 5 membrane-spanning stretches (helical) occupy residues 33–53, 205–225, 239–259, 265–285, and 297–317; these read LLWG…QALS, HFWV…WLVA, LFNL…WDSP, VTFY…ATDF, and IAGV…YYSL. 3 disordered regions span residues 339–387, 448–468, and 490–592; these read GDKT…PPEA, ALSA…LENS, and FASD…APFP. The span at 340–359 shows a compositional bias: basic and acidic residues; sequence DKTERRDSPRATDLAGKRTE. Polar residues-rich tracts occupy residues 450 to 468 and 490 to 509; these read SAQQ…LENS and FASD…TQGE. The span at 523–536 shows a compositional bias: gly residues; that stretch reads QGKGTGGQQRGGEG. Residues 550–567 are compositionally biased toward polar residues; the sequence is VATSSQQEGSPATLQTAH.

The protein belongs to the XK family.

It localises to the cell membrane. This Homo sapiens (Human) protein is XK-related protein 5.